We begin with the raw amino-acid sequence, 935 residues long: Myocardin (935 aa).

Residues 12–27 carry the MEF2C-binding motif; sequence IRRKFRSVLQLRLQQR. 3 RPEL repeats span residues 18–43, 62–87, and 106–131; these read SVLQ…PPLK, DSLR…QAST, and DDLN…PMDS. The segment at 37-73 is disordered; it reads GLIPPLKGPTEFHDPRKQLDSAKTEDSLRRKGRNRSD. Residues 46 to 73 are compositionally biased toward basic and acidic residues; the sequence is TEFHDPRKQLDSAKTEDSLRRKGRNRSD. The interval 153-201 is HDAC5-binding; it reads FEDDSSRDGLSPDQARSEDPQGSTGSTPDIKSTEAPLDTIQDLTPGSES. The tract at residues 155 to 283 is disordered; it reads DDSSRDGLSP…SPPPMDSAYA (129 aa). 2 stretches are compositionally biased toward polar residues: residues 172 to 182 and 206 to 216; these read PQGSTGSTPDI and AASQPGNQSDP. Basic residues predominate over residues 244 to 261; sequence NRHKKPKDPKPKVKKLKY. Residues 287-322 adopt a coiled-coil conformation; the sequence is QQQQLFLQLQILSQQQQQQQQQQQQQQQQQQQQQRF. The segment at 337–378 is disordered; it reads EQMARNPNPSSTPLSNTPLSPVKNSISGQTGVSSLKPGPLPP. The segment covering 342–357 has biased composition (low complexity); that stretch reads NPNPSSTPLSNTPLSP. Positions 358-369 are enriched in polar residues; the sequence is VKNSISGQTGVS. One can recognise an SAP domain in the interval 380–414; the sequence is LDDLKVSELRQQLRIRGLPVSGTKTALVDRLRPFQ. 4 positions are modified to phosphoserine; by GSK3-beta: Ser454, Ser458, Ser462, and Ser466. Positions 498 to 518 are disordered; it reads ESLLSSLNGGSGPSEPDGLDS. Residues 519–563 adopt a coiled-coil conformation; the sequence is EKDKMLVEKQKVINQLTWKLRQEQRQVEELRMQLQKQKSSCSDQK. Residues 579-605 form a disordered region; sequence SCPFAPQQASGKGQGHSSDSPPPACET. Positions 585–597 are enriched in polar residues; sequence QQASGKGQGHSSD. A phosphoserine; by GSK3-beta mark is found at Ser624, Ser628, Ser632, and Ser636. The interval 654 to 731 is disordered; the sequence is NNHYFLASSS…DAVKQQMTRS (78 aa). Positions 660–691 are enriched in polar residues; it reads ASSSGAQRENHGVSSPSSSQGCAQMTGLQSSD. Over residues 695–709 the composition is skewed to low complexity; it reads PTFSIPSPTFSKSSS. The interval 714–935 is required for interaction with and ubiquitination by STUB1; that stretch reads ITQPPSYEDA…SPMDLHLQQW (222 aa). Phosphoserine; by MAPK1 and MAPK3 occurs at positions 812, 859, and 866. Phosphothreonine; by MAPK1 and MAPK3 is present on Thr893.

In terms of assembly, homodimer. Interacts with MLLT7/FOXO4. Interacts with SRF, its association does not depend on specific DNA sequences for ternary complex formation. Interacts (via C-terminal) with EP300 (via CREB-binding domain). Interacts with HDAC4 and HDAC5. Interacts with MEF2C. Interacts (via C-terminus) with STUB1/CHIP. Interacts with PURB. Post-translationally, ubiquitinated; by STUB1/CHIP at the C-terminus, leading to its degradation by the proteasome. Phosphorylation by GSK3B is required for STUB1/CHIP-mediated ubiquitination. Phosphorylation negatively regulates transcriptional activity. Phosphorylated; by GSK3B. As to expression, expressed in smooth muscle cell-containing tissues. Expressed in the heart. Expressed in the aorta and bladder. Weakly expression in the lung, testis and kidney. Weakly expressed in the stomach. Weakly expressed in the intestine and colon. In terms of tissue distribution, expressed in the heart. Predominantly expressed in cardiac muscle. As to expression, predominantly expressed in smooth muscle cell-rich tissues.

It localises to the nucleus speckle. In terms of biological role, smooth muscle cells (SM) and cardiac muscle cells-specific transcriptional factor which uses the canonical single or multiple CArG boxes DNA sequence. Acts as a cofactor of serum response factor (SRF) with the potential to modulate SRF-target genes. Plays a crucial role in cardiogenesis, urinary bladder development, and differentiation of the smooth muscle cell lineage (myogenesis). Positively regulates the transcription of genes involved in vascular smooth muscle contraction. Positively regulates the activation of smooth muscle cell gene promoter regions. Functionally, positively regulates the activation of smooth muscle cell gene promoter regions. Activation of the MYH6 promoter is enhanced in the presence of MEF2C. The polypeptide is Myocardin (Myocd) (Mus musculus (Mouse)).